Reading from the N-terminus, the 148-residue chain is Snaclec B2 (148 aa).

The first 24 residues, 1-24 (MGRLISVSFGLLVVFLSLSGTGAA), serve as a signal peptide directing secretion. 3 cysteine pairs are disulfide-bonded: Cys-27/Cys-38, Cys-55/Cys-144, and Cys-121/Cys-136. Positions 34-145 (YDQHCYKVFD…CRLLGHFVCK (112 aa)) constitute a C-type lectin domain.

It belongs to the snaclec family. Heterodimer; disulfide-linked. As to expression, expressed by the venom gland.

Its subcellular location is the secreted. Functionally, interferes with one step of hemostasis (modulation of platelet aggregation, or coagulation cascade, for example). The polypeptide is Snaclec B2 (Macrovipera lebetinus (Levantine viper)).